The sequence spans 238 residues: tRNA1(Val) (adenine(37)-N6)-methyltransferase (238 aa).

Belongs to the methyltransferase superfamily. tRNA (adenine-N(6)-)-methyltransferase family.

The protein localises to the cytoplasm. It carries out the reaction adenosine(37) in tRNA1(Val) + S-adenosyl-L-methionine = N(6)-methyladenosine(37) in tRNA1(Val) + S-adenosyl-L-homocysteine + H(+). Functionally, specifically methylates the adenine in position 37 of tRNA(1)(Val) (anticodon cmo5UAC). The chain is tRNA1(Val) (adenine(37)-N6)-methyltransferase from Cytophaga hutchinsonii (strain ATCC 33406 / DSM 1761 / CIP 103989 / NBRC 15051 / NCIMB 9469 / D465).